A 172-amino-acid polypeptide reads, in one-letter code: Adrenodoxin-like protein 1, mitochondrial (172 aa).

A 2Fe-2S ferredoxin-type domain is found at 57-159; sequence VNITYVDKDG…GMELELPKAT (103 aa). Residues C94, C100, C103, and C140 each contribute to the [2Fe-2S] cluster site.

This sequence belongs to the adrenodoxin/putidaredoxin family. Requires [2Fe-2S] cluster as cofactor.

The protein resides in the mitochondrion matrix. In terms of biological role, required for ecdysteroidogenesis in the prothoracic gland which is necessary for larval to pupal transition. In Drosophila melanogaster (Fruit fly), this protein is Adrenodoxin-like protein 1, mitochondrial.